Here is a 302-residue protein sequence, read N- to C-terminus: Bifunctional phosphoglucose/phosphomannose isomerase (302 aa).

One can recognise an SIS domain in the interval 27–160; it reads VEGEVVRIEA…KVYGIDVKIP (134 aa). The D-fructose 6-phosphate site is built by Gly-47, Ser-48, Ser-87, Ser-89, Thr-92, and Arg-135. D-glucose 6-phosphate is bound by residues Gly-47, Ser-48, Ser-87, Ser-89, Thr-92, and Arg-135. Residue Glu-203 is the Proton acceptor of the active site. The D-fructose 6-phosphate site is built by His-219 and Lys-298. Residues His-219 and Lys-298 each contribute to the D-glucose 6-phosphate site. His-219 acts as the Proton donor in catalysis. The active-site Proton acceptor is the Lys-298.

The protein belongs to the PGI/PMI family. In terms of assembly, homodimer.

The protein localises to the cytoplasm. The enzyme catalyses alpha-D-glucose 6-phosphate = beta-D-fructose 6-phosphate. It carries out the reaction D-mannose 6-phosphate = D-fructose 6-phosphate. Inhibited by 5-phosphoarabinonate (PAB) and 6-phosphogluconate. Functionally, dual specificity isomerase that catalyzes the isomerization of both glucose-6-phosphate and mannose-6-phosphate to fructose-6-phosphate with similar catalytic efficiency. This chain is Bifunctional phosphoglucose/phosphomannose isomerase, found in Pyrobaculum aerophilum (strain ATCC 51768 / DSM 7523 / JCM 9630 / CIP 104966 / NBRC 100827 / IM2).